Consider the following 314-residue polypeptide: MAQFQIECVESSTRKNQQQYSKFSLEPLDRGQGTTVGNALRRVLLSNLPGAAVTAIRIAGVNHEFATILGVREDVLEIMLNMKELVLKSYTDQPQIGRLTAIGPGTVTAAQFEVPSEVEVIDPNQYIATLAEGAKLEMEFRVERGVGYRVIERGKDENSSLDFLQIDSVFMPVTKVNYTVEDIRADGMSPKDRLILDIWTNGSIQPREALSEASDIIANLFIPLKDLNELEAAHSDYQDEVNPESQIPIEELQLSVRAYNCLKRAQINSVADLLEYSQEDLLEIKNFGLKSAEEVIEALQKRLGITLPHEKAKA.

Residues 1–228 are alpha N-terminal domain (alpha-NTD); that stretch reads MAQFQIECVE…NLFIPLKDLN (228 aa). The alpha C-terminal domain (alpha-CTD) stretch occupies residues 243–314; the sequence is PESQIPIEEL…ITLPHEKAKA (72 aa).

The protein belongs to the RNA polymerase alpha chain family. As to quaternary structure, homodimer. In cyanobacteria the RNAP catalytic core is composed of 2 alpha, 1 beta, 1 beta', 1 gamma and 1 omega subunit. When a sigma factor is associated with the core the holoenzyme is formed, which can initiate transcription.

The enzyme catalyses RNA(n) + a ribonucleoside 5'-triphosphate = RNA(n+1) + diphosphate. Its function is as follows. DNA-dependent RNA polymerase catalyzes the transcription of DNA into RNA using the four ribonucleoside triphosphates as substrates. This chain is DNA-directed RNA polymerase subunit alpha, found in Synechocystis sp. (strain ATCC 27184 / PCC 6803 / Kazusa).